The chain runs to 207 residues: Holliday junction resolvase RecU (207 aa).

Residues 1–30 (MPIRYPNGQPYSRSPKQGQAKKPLPADTYS) form a disordered region. The Mg(2+) site is built by Thr87, Asp89, Glu102, and Gln121.

The protein belongs to the RecU family. Mg(2+) serves as cofactor.

Its subcellular location is the cytoplasm. The enzyme catalyses Endonucleolytic cleavage at a junction such as a reciprocal single-stranded crossover between two homologous DNA duplexes (Holliday junction).. Functionally, endonuclease that resolves Holliday junction intermediates in genetic recombination. Cleaves mobile four-strand junctions by introducing symmetrical nicks in paired strands. Promotes annealing of linear ssDNA with homologous dsDNA. Required for DNA repair, homologous recombination and chromosome segregation. The protein is Holliday junction resolvase RecU of Shouchella clausii (strain KSM-K16) (Alkalihalobacillus clausii).